Consider the following 152-residue polypeptide: UPF0266 membrane protein YobD (152 aa).

Residues 1-5 (MTITD) lie on the Periplasmic side of the membrane. A helical transmembrane segment spans residues 6 to 26 (LVLILFIAALLAYALYDQFIM). Residues 27–44 (PRRNGPTLLSIALLRRGR) are Cytoplasmic-facing. A helical membrane pass occupies residues 45 to 65 (IDSVIFVGLVAILIYNNVTSH). Residue glycine 66 is a topological domain, periplasmic. A helical membrane pass occupies residues 67-87 (AQMTTWLLSALALMGFYIFWI). At 88–152 (RTPRIIFKQR…KIYKLLIENQ (65 aa)) the chain is on the cytoplasmic side.

It belongs to the UPF0266 family.

Its subcellular location is the cell inner membrane. The protein is UPF0266 membrane protein YobD (yobD) of Salmonella typhi.